The primary structure comprises 109 residues: Nucleoid-associated protein AHA_2212 (109 aa).

2 disordered regions span residues 1–23 (MFGK…RMQK) and 88–109 (NKSK…KMPF). A compositionally biased stretch (low complexity) spans 11-23 (MKQAQQMQERMQK).

The protein belongs to the YbaB/EbfC family. As to quaternary structure, homodimer.

Its subcellular location is the cytoplasm. The protein localises to the nucleoid. Binds to DNA and alters its conformation. May be involved in regulation of gene expression, nucleoid organization and DNA protection. This chain is Nucleoid-associated protein AHA_2212, found in Aeromonas hydrophila subsp. hydrophila (strain ATCC 7966 / DSM 30187 / BCRC 13018 / CCUG 14551 / JCM 1027 / KCTC 2358 / NCIMB 9240 / NCTC 8049).